A 412-amino-acid chain; its full sequence is Protein MITOFERRINLIKE 1, chloroplastic (412 aa).

The transit peptide at 1–92 directs the protein to the chloroplast; that stretch reads MEARLSETLG…PGPEFLKWIK (92 aa). A disordered region spans residues 43–83; the sequence is VRNPKLKTKSSQKPPKFSANFRRSDPPFASTSISDPTHEKP. Solcar repeat units lie at residues 112-198, 206-288, and 298-392; these read ERAI…GKSL, PTVL…LKAA, and LEPL…ARLT. Transmembrane regions (helical) follow at residues 115-135, 167-187, 208-228, 262-282, 303-323, and 365-385; these read IIGAGAGGLAGAFTYVTLLPL, ILGFYSGVSAVIVGSTFSSAV, VLIPPTAGAMGNIISSAIMVP, AGYSATLLRNLPAGVLSYSSF, SVCCGALAGAISASITTPLDV, and TRGMGPRVVHSACFSAIGYFA.

Belongs to the mitochondrial carrier (TC 2.A.29) family. Expressed in leaves, developing flowers and siliques.

It localises to the plastid. It is found in the chloroplast inner membrane. Functionally, probably involved in iron transport into chloroplasts. The chain is Protein MITOFERRINLIKE 1, chloroplastic (MFL1) from Arabidopsis thaliana (Mouse-ear cress).